The chain runs to 288 residues: Transmembrane and coiled-coil domain-containing protein 5A (288 aa).

Residues I13–K105 adopt a coiled-coil conformation. A helical membrane pass occupies residues S227–I249.

In terms of tissue distribution, testis-specific. Expressed in spermatogenic cells of testis but disappear by the time mature spermatozoa are formed (at protein level).

The protein localises to the endoplasmic reticulum membrane. The protein resides in the nucleus membrane. In Rattus norvegicus (Rat), this protein is Transmembrane and coiled-coil domain-containing protein 5A (Tmco5a).